Here is a 397-residue protein sequence, read N- to C-terminus: Mycinamicin IV hydroxylase/epoxidase (397 aa).

Residues 63–86 (RGPSMTRDEPRTRPEMVKGGLLSM) form a disordered region. The span at 68–78 (TRDEPRTRPEM) shows a compositional bias: basic and acidic residues. A substrate-binding site is contributed by Gly-81. Positions 91, 95, 288, 344, and 346 each coordinate heme.

The protein belongs to the cytochrome P450 family. The cofactor is heme.

Its pathway is antibiotic biosynthesis; mycinamicin biosynthesis. Its function is as follows. Involved in the biosynthesis of mycinamicin, a 16-membered macrolide antibiotic. Catalyzes consecutive hydroxylation (at C14) and epoxidation (at C12-C13) reactions with mycinamicin IV as initial substrate, leading to mycinamicin II. These reactions require prior dimethylation of 6-deoxyallose to mycinose for effective conversion by the dual function MycG enzyme. This is Mycinamicin IV hydroxylase/epoxidase from Micromonospora griseorubida.